A 148-amino-acid polypeptide reads, in one-letter code: uncharacterized protein (148 aa).

The interval 83 to 148 (QPAVIPPVKA…TKKSNKKTRS (66 aa)) is disordered. Basic residues-rich tracts occupy residues 92–103 (AKPKATKKKTPV) and 113–124 (KQTKPKQSKPKS).

This is an uncharacterized protein from Mycoplasma genitalium (strain ATCC 33530 / DSM 19775 / NCTC 10195 / G37) (Mycoplasmoides genitalium).